Here is a 504-residue protein sequence, read N- to C-terminus: MSVVRWPRVLTPSLLSQILKKQKNPVTALKLFEEAKERFPSYGHNGSVYATMIDILGKSNRVLEMKYVIERMKEDSCECKDSVFASVIRTFSRAGRLEDAISLFKSLHEFNCVNWSLSFDTLLQEMVKESELEAACHIFRKYCYGWEVNSRITALNLLMKVLCQVNRSDLASQVFQEMNYQGCYPDRDSYRILMKGFCLEGKLEEATHLLYSMFWRISQKGSGEDIVVYRILLDALCDAGEVDDAIEILGKILRKGLKAPKRCYHHIEAGHWESSSEGIERVKRLLTETLIRGAIPCLDSYSAMATDLFEEGKLVEGEEVLLAMRSKGFEPTPFIYGAKVKALCRAGKLKEAVSVINKEMMQGHCLPTVGVYNVLIKGLCDDGKSMEAVGYLKKMSKQVSCVANEETYQTLVDGLCRDGQFLEASQVMEEMLIKSHFPGVETYHMMIKGLCDMDRRYEAVMWLEEMVSQDMVPESSVWKALAESVCFCAIDVVEILEHLISSKR.

PPR repeat units follow at residues Asn45–Cys79, Lys80–Asn114, Trp115–Gly145, Arg151–Pro185, Asp186–Arg216, Asp225–Ala259, Pro260–Pro296, Cys297–Pro331, Thr332–Pro367, Thr368–Gln398, Asn404–Pro438, and Gly439–Pro473.

The protein belongs to the PPR family. P subfamily.

The chain is Pentatricopeptide repeat-containing protein At1g05600 from Arabidopsis thaliana (Mouse-ear cress).